The chain runs to 880 residues: Leucine--tRNA ligase (880 aa).

The short motif at proline 49–histidine 59 is the 'HIGH' region element. The 'KMSKS' region motif lies at lysine 638–serine 642. Lysine 641 contributes to the ATP binding site.

This sequence belongs to the class-I aminoacyl-tRNA synthetase family.

The protein resides in the cytoplasm. It catalyses the reaction tRNA(Leu) + L-leucine + ATP = L-leucyl-tRNA(Leu) + AMP + diphosphate. The polypeptide is Leucine--tRNA ligase (Bartonella henselae (strain ATCC 49882 / DSM 28221 / CCUG 30454 / Houston 1) (Rochalimaea henselae)).